The primary structure comprises 62 residues: MTAPKCVTTTTYLVKTKEQPWWPDNAIRRWWISVAIVIFIGVCLVALMYFTQQQARNGSGSG.

Residues 30–50 (WWISVAIVIFIGVCLVALMYF) traverse the membrane as a helical segment.

Its subcellular location is the host membrane. This is Protein UL148D (UL148D) from Human cytomegalovirus (strain Merlin) (HHV-5).